The chain runs to 245 residues: 1-(5-phosphoribosyl)-5-[(5-phosphoribosylamino)methylideneamino] imidazole-4-carboxamide isomerase (245 aa).

Asp-7 (proton acceptor) is an active-site residue. The active-site Proton donor is the Asp-129.

The protein belongs to the HisA/HisF family.

The protein localises to the cytoplasm. It catalyses the reaction 1-(5-phospho-beta-D-ribosyl)-5-[(5-phospho-beta-D-ribosylamino)methylideneamino]imidazole-4-carboxamide = 5-[(5-phospho-1-deoxy-D-ribulos-1-ylimino)methylamino]-1-(5-phospho-beta-D-ribosyl)imidazole-4-carboxamide. It participates in amino-acid biosynthesis; L-histidine biosynthesis; L-histidine from 5-phospho-alpha-D-ribose 1-diphosphate: step 4/9. The sequence is that of 1-(5-phosphoribosyl)-5-[(5-phosphoribosylamino)methylideneamino] imidazole-4-carboxamide isomerase from Aliivibrio salmonicida (strain LFI1238) (Vibrio salmonicida (strain LFI1238)).